Reading from the N-terminus, the 307-residue chain is UDP-N-acetylenolpyruvoylglucosamine reductase (307 aa).

One can recognise an FAD-binding PCMH-type domain in the interval 33–197 (TGGNADFYIT…LEAAFTLAPG (165 aa)). Arginine 176 is a catalytic residue. Serine 226 functions as the Proton donor in the catalytic mechanism. Residue glutamate 296 is part of the active site.

Belongs to the MurB family. FAD is required as a cofactor.

Its subcellular location is the cytoplasm. The enzyme catalyses UDP-N-acetyl-alpha-D-muramate + NADP(+) = UDP-N-acetyl-3-O-(1-carboxyvinyl)-alpha-D-glucosamine + NADPH + H(+). It functions in the pathway cell wall biogenesis; peptidoglycan biosynthesis. Functionally, cell wall formation. The polypeptide is UDP-N-acetylenolpyruvoylglucosamine reductase (Staphylococcus aureus (strain NCTC 8325 / PS 47)).